The following is a 454-amino-acid chain: MTDFDLAGIGIGPFNLGLAALLSSHENLSNVFLERKPAFRWHEGLILPGTTLQVPFMADLVTMADPTHRLSFLNYLAVHDRLYKFYFYENFMIPRQEYDHYCRWASQQLSACRFGEEVVDVAHESASDSFIVESRSASGGKQQYRSRNIAIGVGTAPFLPKWAQIKTLAPLMHSSEFGRRRLELSKRRRVTVIGSGQSAAECVLALLNDLTPEMVAAGASIQWITRSAGFFPMEYSKLGLEYFTPDYMRHFHRIAPVRRREIVADQGLLYKGISFSTIGEIFDLMYERSVGGRDPGLALFSNCAVETLESAGGSGSFRIGINHNHLDEKATVETDAIVAATGYRHAWPEWLGSLKGSVLDTCEWGDLVVGGDFRARRSDGGKGHVFVQNAETFHHGVGAPDLGLGAFRNAVIVNQLLGREHYRVNASASFQKFGLPSSQTAPSSISGDFYAHAS.

Position 7–13 (7–13 (AGIGIGP)) interacts with FAD.

Belongs to the lysine N(6)-hydroxylase/L-ornithine N(5)-oxygenase family. FAD is required as a cofactor.

It functions in the pathway siderophore biosynthesis; rhizobactin biosynthesis. This chain is Rhizobactin siderophore biosynthesis protein RhbE (rhbE), found in Rhizobium meliloti (strain 1021) (Ensifer meliloti).